Reading from the N-terminus, the 193-residue chain is Probable nicotinate-nucleotide adenylyltransferase (193 aa).

It belongs to the NadD family.

The catalysed reaction is nicotinate beta-D-ribonucleotide + ATP + H(+) = deamido-NAD(+) + diphosphate. The protein operates within cofactor biosynthesis; NAD(+) biosynthesis; deamido-NAD(+) from nicotinate D-ribonucleotide: step 1/1. Its function is as follows. Catalyzes the reversible adenylation of nicotinate mononucleotide (NaMN) to nicotinic acid adenine dinucleotide (NaAD). In Chlorobium phaeovibrioides (strain DSM 265 / 1930) (Prosthecochloris vibrioformis (strain DSM 265)), this protein is Probable nicotinate-nucleotide adenylyltransferase.